The chain runs to 354 residues: Methionine import ATP-binding protein MetN (354 aa).

Positions 8–250 (LDHIDITFRQ…PKEALTQEFI (243 aa)) constitute an ABC transporter domain. Position 42–49 (42–49 (GYSGAGKS)) interacts with ATP.

It belongs to the ABC transporter superfamily. Methionine importer (TC 3.A.1.24) family. The complex is composed of two ATP-binding proteins (MetN), two transmembrane proteins (MetI) and a solute-binding protein (MetQ).

The protein localises to the cell membrane. It catalyses the reaction L-methionine(out) + ATP + H2O = L-methionine(in) + ADP + phosphate + H(+). The catalysed reaction is D-methionine(out) + ATP + H2O = D-methionine(in) + ADP + phosphate + H(+). In terms of biological role, part of the ABC transporter complex MetNIQ involved in methionine import. Responsible for energy coupling to the transport system. The polypeptide is Methionine import ATP-binding protein MetN (Streptococcus pyogenes serotype M1).